Here is a 183-residue protein sequence, read N- to C-terminus: Endoribonuclease AbiQ (183 aa).

This sequence belongs to the ToxN/AbiQ toxin family. In terms of assembly, forms a triangular heterohexamer with a single 35-nt-long repeat of RNA antitoxin AntiQ.

It is found in the cytoplasm. Functionally, toxic component of a type III toxin-antitoxin (TA) system. An endoribonuclease that is probably sequence-specific. It is neutralized by its cognate antitoxin RNA AntiQ, which has 2.8 35 nucleotide-long repeats. Cannot be cloned in L.lactis subsp. cremoris strain NZ9000 in the absence of the antitoxin gene; expression in strain NZ9000 even in the presence of antiQ inhibits growth in a bacteriostatic fashion. Confers resistance to 936 and c2 phages but not P335 phages in L.lactis, causes an abortive infection (Abi phenotype). Viral DNA is replicated but not cleaved from its concatemeric form, while the viral major structural protein is produced normally in the presence of this protein. Operon expression in E.coli confers resistance to 3 phages of the Myoviridae family (T4, RB69 and phage 2) and 1 of the Siphoviridae family (T5), but not other tested phages (T1, T3, lambda vir, HK97, Mu and pilH alpha). The presence of this operon in L.lactis subsp. lactis strain IL1403 during phage P008 infection alters the viral transcription profiles. The chain is Endoribonuclease AbiQ from Lactococcus lactis subsp. lactis (Streptococcus lactis).